The primary structure comprises 692 residues: Ino eighty subunit 1 (692 aa).

Over residues 1 to 25 the composition is skewed to basic and acidic residues; the sequence is MGKRVYDPIHDTFQLREDNSDETKA. Positions 1 to 133 are disordered; sequence MGKRVYDPIH…RHLKKPDGEP (133 aa). Residue Ser-27 is modified to Phosphoserine. Polar residues predominate over residues 28–56; the sequence is PMQSVKSGSQEEASPSSIQSETETVTTKS. Positions 64 to 80 are enriched in acidic residues; that stretch reads EIDDKNDDDSTQSEEEN. The span at 97-109 shows a compositional bias: polar residues; it reads GASTATGPVTTNT. Residues 340 to 385 adopt a coiled-coil conformation; the sequence is SKYVEVESKAQEQDMVDEQNEVKETEAENEKQESKAAYATTLFDIL. Over residues 465–485 the composition is skewed to basic and acidic residues; that stretch reads FMSKMEEGRKRERTNVTEVKK. Positions 465–550 are disordered; the sequence is FMSKMEEGRK…VTPAAPTETE (86 aa). 3 positions are modified to phosphoserine: Ser-487, Ser-493, and Ser-504. The span at 493–504 shows a compositional bias: acidic residues; sequence SEEDGEGEDDKS. Thr-507 is modified (phosphothreonine). Polar residues predominate over residues 513–528; that stretch reads SLLTPTPILESSSPMT.

Component of the chromatin-remodeling INO80 complex, at least composed of ARP4, ARP5, ARP8, RVB1, RVB2, TAF14, NHP10, IES1, IES3, IES4, IES6, ACT1, IES2, IES5 and INO80.

The protein resides in the nucleus. Probably involved in transcription regulation via its interaction with the INO80 complex, a chromatin-remodeling complex. This is Ino eighty subunit 1 (IES1) from Saccharomyces cerevisiae (strain ATCC 204508 / S288c) (Baker's yeast).